We begin with the raw amino-acid sequence, 384 residues long: S-adenosylmethionine synthase (384 aa).

H15 lines the ATP pocket. Residue D17 coordinates Mg(2+). E43 provides a ligand contact to K(+). Positions 56 and 99 each coordinate L-methionine. The interval 99 to 109 (QSPDINQGVDR) is flexible loop. ATP-binding positions include 164–166 (DAK), 230–231 (RF), D239, 245–246 (RK), A262, and K266. D239 contributes to the L-methionine binding site. K270 contributes to the L-methionine binding site.

The protein belongs to the AdoMet synthase family. Homotetramer; dimer of dimers. Mg(2+) serves as cofactor. K(+) is required as a cofactor.

Its subcellular location is the cytoplasm. The enzyme catalyses L-methionine + ATP + H2O = S-adenosyl-L-methionine + phosphate + diphosphate. The protein operates within amino-acid biosynthesis; S-adenosyl-L-methionine biosynthesis; S-adenosyl-L-methionine from L-methionine: step 1/1. Catalyzes the formation of S-adenosylmethionine (AdoMet) from methionine and ATP. The overall synthetic reaction is composed of two sequential steps, AdoMet formation and the subsequent tripolyphosphate hydrolysis which occurs prior to release of AdoMet from the enzyme. The polypeptide is S-adenosylmethionine synthase (Yersinia enterocolitica serotype O:8 / biotype 1B (strain NCTC 13174 / 8081)).